Here is a 277-residue protein sequence, read N- to C-terminus: Multiple sugar-binding transport system permease protein MsmG (277 aa).

6 consecutive transmembrane segments (helical) span residues 13–33 (YVLL…TVFS), 74–94 (VITV…AYSI), 110–130 (LLIL…TVMM), 141–161 (LIIL…VGYI), 198–218 (TTLI…LLIL), and 243–263 (GPSF…YLIF). The region spanning 69-263 (FWNSTVITVL…ITITIVYLIF (195 aa)) is the ABC transmembrane type-1 domain.

The protein belongs to the binding-protein-dependent transport system permease family. MalFG subfamily.

Its subcellular location is the cell membrane. In terms of biological role, involved in a binding protein-dependent transport system responsible for the uptake of melibiose, raffinose and isomaltotriose. The protein is Multiple sugar-binding transport system permease protein MsmG (msmG) of Streptococcus mutans serotype c (strain ATCC 700610 / UA159).